Here is a 434-residue protein sequence, read N- to C-terminus: ATP-dependent protease ATPase subunit HslU (434 aa).

Residues Val-18, 60 to 65, Asp-247, Glu-312, and Arg-384 each bind ATP; that span reads GVGKTE.

Belongs to the ClpX chaperone family. HslU subfamily. A double ring-shaped homohexamer of HslV is capped on each side by a ring-shaped HslU homohexamer. The assembly of the HslU/HslV complex is dependent on binding of ATP.

The protein resides in the cytoplasm. ATPase subunit of a proteasome-like degradation complex; this subunit has chaperone activity. The binding of ATP and its subsequent hydrolysis by HslU are essential for unfolding of protein substrates subsequently hydrolyzed by HslV. HslU recognizes the N-terminal part of its protein substrates and unfolds these before they are guided to HslV for hydrolysis. In Phenylobacterium zucineum (strain HLK1), this protein is ATP-dependent protease ATPase subunit HslU.